Consider the following 306-residue polypeptide: Elongation factor Ts (306 aa).

The tract at residues 79 to 82 is involved in Mg(2+) ion dislocation from EF-Tu; it reads TDFV.

It belongs to the EF-Ts family.

The protein localises to the cytoplasm. Its function is as follows. Associates with the EF-Tu.GDP complex and induces the exchange of GDP to GTP. It remains bound to the aminoacyl-tRNA.EF-Tu.GTP complex up to the GTP hydrolysis stage on the ribosome. This is Elongation factor Ts from Mesorhizobium japonicum (strain LMG 29417 / CECT 9101 / MAFF 303099) (Mesorhizobium loti (strain MAFF 303099)).